Consider the following 122-residue polypeptide: Large ribosomal subunit protein uL14 (122 aa).

This sequence belongs to the universal ribosomal protein uL14 family. In terms of assembly, part of the 50S ribosomal subunit. Forms a cluster with proteins L3 and L19. In the 70S ribosome, L14 and L19 interact and together make contacts with the 16S rRNA in bridges B5 and B8.

Its function is as follows. Binds to 23S rRNA. Forms part of two intersubunit bridges in the 70S ribosome. In Azoarcus sp. (strain BH72), this protein is Large ribosomal subunit protein uL14.